We begin with the raw amino-acid sequence, 108 residues long: UPF0145 protein HDEF_1024 (108 aa).

Belongs to the UPF0145 family.

The protein is UPF0145 protein HDEF_1024 of Hamiltonella defensa subsp. Acyrthosiphon pisum (strain 5AT).